Consider the following 729-residue polypeptide: Phosphoribosylformylglycinamidine synthase subunit PurL (729 aa).

H54 is an active-site residue. Positions 57 and 96 each coordinate ATP. Position 98 (E98) interacts with Mg(2+). Residues 99-102 (SHNH) and R121 each bind substrate. The Proton acceptor role is filled by H100. Mg(2+) is bound at residue D122. Residue Q245 participates in substrate binding. D273 provides a ligand contact to Mg(2+). 317–319 (ETQ) lines the substrate pocket. Residues D495 and G532 each coordinate ATP. N533 is a binding site for Mg(2+). A substrate-binding site is contributed by S535.

The protein belongs to the FGAMS family. As to quaternary structure, monomer. Part of the FGAM synthase complex composed of 1 PurL, 1 PurQ and 2 PurS subunits.

The protein localises to the cytoplasm. The catalysed reaction is N(2)-formyl-N(1)-(5-phospho-beta-D-ribosyl)glycinamide + L-glutamine + ATP + H2O = 2-formamido-N(1)-(5-O-phospho-beta-D-ribosyl)acetamidine + L-glutamate + ADP + phosphate + H(+). It functions in the pathway purine metabolism; IMP biosynthesis via de novo pathway; 5-amino-1-(5-phospho-D-ribosyl)imidazole from N(2)-formyl-N(1)-(5-phospho-D-ribosyl)glycinamide: step 1/2. Part of the phosphoribosylformylglycinamidine synthase complex involved in the purines biosynthetic pathway. Catalyzes the ATP-dependent conversion of formylglycinamide ribonucleotide (FGAR) and glutamine to yield formylglycinamidine ribonucleotide (FGAM) and glutamate. The FGAM synthase complex is composed of three subunits. PurQ produces an ammonia molecule by converting glutamine to glutamate. PurL transfers the ammonia molecule to FGAR to form FGAM in an ATP-dependent manner. PurS interacts with PurQ and PurL and is thought to assist in the transfer of the ammonia molecule from PurQ to PurL. The sequence is that of Phosphoribosylformylglycinamidine synthase subunit PurL from Staphylococcus epidermidis (strain ATCC 35984 / DSM 28319 / BCRC 17069 / CCUG 31568 / BM 3577 / RP62A).